A 939-amino-acid chain; its full sequence is Dynamin-like GTPase MGM1, mitochondrial (939 aa).

Residues 1–27 (MSAQLRAAAAITPAARRVISGPAAVRR) constitute a mitochondrion transit peptide. A helical transmembrane segment spans residues 85 to 103 (FIRVPALFGGMMLGAVGWV). Residues 170–183 (AGEGSGSGEGGPNG) show a composition bias toward gly residues. Residues 170–196 (AGEGSGSGEGGPNGGPEPPRQSRAGAA) are disordered. One can recognise a Dynamin-type G domain in the interval 249-522 (TVTLPSIVVI…LEQQMSSKLN (274 aa)). Residues 259–266 (GSQSSGKS) form a G1 motif region. GTP contacts are provided by S262, G264, K265, S266, S267, and G281. S266 contributes to the Mg(2+) binding site. The G2 motif stretch occupies residues 285 to 287 (ITR). T286 and D359 together coordinate Mg(2+). The tract at residues 359-362 (DLPG) is G3 motif. A G4 motif region spans residues 427 to 430 (TKMD). K428, D430, and S457 together coordinate GTP. The interval 456-459 (ISKL) is G5 motif. A stalk region region spans residues 549 to 703 (SAESYLAASL…TSDGIEISLK (155 aa)). The tract at residues 710–809 (DIQPNEWAQG…LSLRIQAAKS (100 aa)) is paddle region. The tract at residues 810–877 (RQCKTLTNKY…GGGLEKFARE (68 aa)) is stalk region. The cysteines at positions 812 and 821 are disulfide-linked. Positions 815–909 (LTNKYYCPEV…KIEELHRISS (95 aa)) constitute a GED domain.

It belongs to the TRAFAC class dynamin-like GTPase superfamily. Dynamin/Fzo/YdjA family. In terms of assembly, oligomeric complex consisting of membrane-bound and soluble forms of MGM1. Post-translationally, cleavage of the transit peptide by mitochondrial processing protease (MPP) produces a long integral membrane form of MGM1 (L-MGM1). Further processing by the rhomboid protease PCP1 produces a short peripheral membrane form of MGM1 (S-MGM1). Both forms are required for full activity.

Its subcellular location is the mitochondrion inner membrane. It is found in the mitochondrion intermembrane space. The catalysed reaction is GTP + H2O = GDP + phosphate + H(+). Its function is as follows. Dynamin-related GTPase that is essential for normal mitochondrial morphology by mediating fusion of the mitochondrial inner membranes, regulating cristae morphology and maintaining respiratory chain function. Exists in two forms: the transmembrane, long form (Dynamin-like GTPase MGM1, long form; L-MGM1), which is tethered to the inner mitochondrial membrane, and the short soluble form (Dynamin-like GTPase MGM1, short form; S-MGM1), which results from proteolytic cleavage and localizes in the intermembrane space. Both forms (L-MGM1 and S-MGM1) cooperate to catalyze the fusion of the mitochondrial inner membrane. The equilibrium between L-MGM1 and S-MGM1 is essential: excess levels of S-MGM1, following loss of mitochondrial membrane potential, lead to an impaired equilibrium between L-MGM1 and S-MGM1, inhibiting mitochondrial fusion. Plays a role in the maintenance and remodeling of mitochondrial cristae, some invaginations of the mitochondrial inner membrane that provide an increase in the surface area. Probably acts by forming helical filaments at the inside of inner membrane tubes with the shape and dimensions of crista junctions. Constitutes the transmembrane long form (L-MGM1) that plays a central role in mitochondrial inner membrane fusion and cristae morphology. L-MGM1 and the soluble short form (S-MGM1) form higher-order helical assemblies that coordinate the fusion of mitochondrial inner membranes. Inner membrane-anchored L-MGM1 molecules initiate membrane remodeling by recruiting soluble S-MGM1 to rapidly polymerize into a flexible cylindrical scaffold encaging the mitochondrial inner membrane. Once at the membrane surface, the formation of S-MGM1 helices induce bilayer curvature. MGM1 dimerization through the paddle region, which inserts into cardiolipin-containing membrane, promotes GTP hydrolysis and the helical assembly of a flexible MGM1 lattice on the membrane, which drives membrane curvature and mitochondrial fusion. In terms of biological role, constitutes the soluble short form (S-MGM1) generated by cleavage by PCP1, which plays a central role in mitochondrial inner membrane fusion and cristae morphology. The transmembrane long form (L-MGM1) and the S-MGM1 form higher-order helical assemblies that coordinate the fusion of mitochondrial inner membranes. Inner membrane-anchored L-MGM1 molecules initiate membrane remodeling by recruiting soluble S-MGM1 to rapidly polymerize into a flexible cylindrical scaffold encaging the mitochondrial inner membrane. Once at the membrane surface, the formation of S-MGM1 helices induce bilayer curvature. MGM1 dimerization through the paddle region, which inserts into cardiolipin-containing membrane, promotes GTP hydrolysis and the helical assembly of a flexible MGM1 lattice on the membrane, which drives membrane curvature and mitochondrial fusion. Excess levels of S-MGM1 produced by cleavage by PCP1 following stress conditions that induce loss of mitochondrial membrane potential, lead to an impaired equilibrium between L-MGM1 and S-MGM1, thereby inhibiting mitochondrial fusion. The protein is Dynamin-like GTPase MGM1, mitochondrial of Chaetomium thermophilum (strain DSM 1495 / CBS 144.50 / IMI 039719) (Thermochaetoides thermophila).